A 284-amino-acid polypeptide reads, in one-letter code: Tropomyosin (284 aa).

Residues 1 to 284 (MEAIKNKMQA…DQTFAELTGY (284 aa)) are a coiled coil.

This sequence belongs to the tropomyosin family. In terms of assembly, homodimer.

In terms of biological role, tropomyosin, in association with the troponin complex, plays a central role in the calcium dependent regulation of muscle contraction. The protein is Tropomyosin of Dermatophagoides pteronyssinus (European house dust mite).